We begin with the raw amino-acid sequence, 126 residues long: Arginine decarboxylase proenzyme (126 aa).

The active-site Schiff-base intermediate with substrate; via pyruvic acid is serine 74. Serine 74 carries the pyruvic acid (Ser); by autocatalysis modification. The Proton acceptor; for processing activity role is filled by histidine 79. Cysteine 94 serves as the catalytic Proton donor; for catalytic activity.

The protein belongs to the prokaryotic AdoMetDC family. Type 1 subfamily. As to quaternary structure, heterooctamer of four alpha and four beta chains arranged as a tetramer of alpha/beta heterodimers. The cofactor is pyruvate. Is synthesized initially as an inactive proenzyme. Formation of the active enzyme involves a self-maturation process in which the active site pyruvoyl group is generated from an internal serine residue via an autocatalytic post-translational modification. Two non-identical subunits are generated from the proenzyme in this reaction, and the pyruvate is formed at the N-terminus of the alpha chain, which is derived from the carboxyl end of the proenzyme. The post-translation cleavage follows an unusual pathway, termed non-hydrolytic serinolysis, in which the side chain hydroxyl group of the serine supplies its oxygen atom to form the C-terminus of the beta chain, while the remainder of the serine residue undergoes an oxidative deamination to produce ammonia and the pyruvoyl group blocking the N-terminus of the alpha chain.

The catalysed reaction is L-arginine + H(+) = agmatine + CO2. Its pathway is amine and polyamine biosynthesis; agmatine biosynthesis; agmatine from L-arginine: step 1/1. Its function is as follows. Specifically catalyzes the decarboxylation of L-arginine to agmatine. Has no S-adenosylmethionine decarboxylase (AdoMetDC) activity. This is Arginine decarboxylase proenzyme from Pyrobaculum aerophilum (strain ATCC 51768 / DSM 7523 / JCM 9630 / CIP 104966 / NBRC 100827 / IM2).